Here is a 1458-residue protein sequence, read N- to C-terminus: Phospholipase B1, membrane-associated (1458 aa).

The first 21 residues, 1-21, serve as a signal peptide directing secretion; the sequence is MGLRPGIFLLELLLLLGQGTP. The Extracellular portion of the chain corresponds to 22 to 1417; that stretch reads QIHTSPRKST…QAEEAPEVLY (1396 aa). 3 tandem repeats follow at residues 39–347, 362–707, and 708–1054. A 4 X 308-326 AA approximate repeats region spans residues 39–1402; the sequence is ETLKNSPFPC…SPYLYTLRNS (1364 aa). N-linked (GlcNAc...) asparagine glycans are attached at residues Asn173 and Asn240. Ser400 is an active-site residue. Asn493 carries an N-linked (GlcNAc...) asparagine glycan. Asp514 is a catalytic residue. 2 N-linked (GlcNAc...) asparagine glycosylation sites follow: Asn529 and Asn590. The active site involves His655. N-linked (GlcNAc...) asparagine glycosylation is found at Asn690, Asn783, Asn797, Asn809, Asn1055, Asn1113, Asn1275, and Asn1378. The stretch at 1064–1402 is repeat 4; the sequence is IENWGSDFLC…SPYLYTLRNS (339 aa). A necessary for membrane localization region spans residues 1403 to 1445; it reads RLLPDQAEEAPEVLYWAVPVAAGVGLVVGIIGTVVWRCRRGGR. A helical membrane pass occupies residues 1418–1438; sequence WAVPVAAGVGLVVGIIGTVVW. At 1439–1458 the chain is on the cytoplasmic side; that stretch reads RCRRGGRREDPPMSLRTVAL.

This sequence belongs to the 'GDSL' lipolytic enzyme family. Phospholipase B1 subfamily. Undergoes proteolytic cleavage in the ileum. In terms of tissue distribution, expressed in the epidermis (at protein level).

The protein resides in the apical cell membrane. It carries out the reaction a 1,2-diacyl-sn-glycero-3-phosphocholine + H2O = a 1-acyl-sn-glycero-3-phosphocholine + a fatty acid + H(+). The enzyme catalyses a 1-O-alkyl-2-acyl-sn-glycero-3-phosphocholine + H2O = a 1-O-alkyl-sn-glycero-3-phosphocholine + a fatty acid + H(+). It catalyses the reaction a 1-acyl-sn-glycero-3-phosphocholine + H2O = sn-glycerol 3-phosphocholine + a fatty acid + H(+). The catalysed reaction is a triacylglycerol + H2O = a diacylglycerol + a fatty acid + H(+). It carries out the reaction 1,2-dihexadecanoyl-sn-glycero-3-phosphocholine + H2O = 1-hexadecanoyl-sn-glycero-3-phosphocholine + hexadecanoate + H(+). The enzyme catalyses 1-hexadecanoyl-2-(9Z-octadecenoyl)-sn-glycero-3-phosphocholine + H2O = 1-hexadecanoyl-sn-glycero-3-phosphocholine + (9Z)-octadecenoate + H(+). It catalyses the reaction 1,2-di-(9Z-octadecenoyl)-sn-glycero-3-phosphocholine + H2O = 1-(9Z-octadecenoyl)-sn-glycero-3-phosphocholine + (9Z)-octadecenoate + H(+). The catalysed reaction is 1-hexadecanoyl-2-(9Z,12Z-octadecadienoyl)-sn-glycero-3-phosphocholine + H2O = (9Z,12Z)-octadecadienoate + 1-hexadecanoyl-sn-glycero-3-phosphocholine + H(+). It carries out the reaction 1-hexadecanoyl-2-(9Z,12Z-octadecadienoyl)-sn-glycero-3-phosphocholine + H2O = 2-(9Z,12Z-octadecadienoyl)-sn-glycero-3-phosphocholine + hexadecanoate + H(+). The enzyme catalyses 1-hexadecanoyl-2-(9Z-octadecenoyl)-sn-glycero-3-phosphoethanolamine + H2O = 1-hexadecanoyl-sn-glycero-3-phosphoethanolamine + (9Z)-octadecenoate + H(+). It catalyses the reaction 1-hexadecanoyl-2-(9Z-octadecenoyl)-sn-glycero-3-phospho-(1'-sn-glycerol) + H2O = 1-hexadecanoyl-sn-glycero-3-phospho-(1'-sn-glycerol) + (9Z)-octadecenoate + H(+). The catalysed reaction is 1,2-dihexadecanoyl-sn-glycero-3-phosphocholine + 2 H2O = sn-glycerol 3-phosphocholine + 2 hexadecanoate + 2 H(+). It carries out the reaction 1-O-hexadecyl-2-(9Z)-octadecenoyl-sn-glycero-3-phosphocholine + H2O = 1-O-hexadecyl-sn-glycero-3-phosphocholine + (9Z)-octadecenoate + H(+). The enzyme catalyses 1-hexadecanoyl-sn-glycero-3-phosphocholine + H2O = sn-glycerol 3-phosphocholine + hexadecanoate + H(+). It catalyses the reaction 1,2,3-tri-(9Z-octadecenoyl)-glycerol + H2O = di-(9Z)-octadecenoylglycerol + (9Z)-octadecenoate + H(+). The catalysed reaction is 1-hexadecanoyl-2-(9Z)-octadecenoyl-3-octadecanoyl-sn-glycerol + H2O = 1-hexadecanoyl-2-(9Z-octadecenoyl)-sn-glycerol + octadecanoate + H(+). It carries out the reaction 1,3-dihexadecanoyl-2-(9Z-octadecenoyl)glycerol + H2O = 1,3-dihexadecanoylglycerol + (9Z)-octadecenoate + H(+). The enzyme catalyses 1,3-dihexadecanoyl-2-(9Z-octadecenoyl)glycerol + H2O = 1-hexadecanoyl-2-(9Z-octadecenoyl)-glycerol + hexadecanoate + H(+). It catalyses the reaction 1-hexadecanoyl-2-(9Z)-octadecenoyl-3-octadecanoyl-sn-glycerol + H2O = 1-hexadecanoyl-3-octadecanoyl-sn-glycerol + (9Z)-octadecenoate + H(+). The catalysed reaction is 1-hexadecanoyl-2-(9Z)-octadecenoyl-3-octadecanoyl-sn-glycerol + H2O = 2-(9Z-octadecenoyl)-3-octadecanoyl-sn-glycerol + hexadecanoate + H(+). It carries out the reaction 1-octadecanoyl-2-(9Z,12Z)-octadecadienoyl-sn-glycerol + H2O = 1-octadecanoyl-sn-glycerol + (9Z,12Z)-octadecadienoate + H(+). The enzyme catalyses 1,2-di-(9Z-octadecenoyl)-sn-glycerol + H2O = 1-(9Z-octadecenoyl)-sn-glycerol + (9Z)-octadecenoate + H(+). It catalyses the reaction 2,3-di-(9Z)-octadecenoyl-sn-glycerol + H2O = 3-(9Z-octadecenoyl)-sn-glycerol + (9Z)-octadecenoate + H(+). The catalysed reaction is 1,3-di-(9Z-octadecenoyl)-glycerol + H2O = 1-(9Z-octadecenoyl)-glycerol + (9Z)-octadecenoate + H(+). It carries out the reaction 1-(9Z-octadecenoyl)-glycerol + H2O = glycerol + (9Z)-octadecenoate + H(+). The enzyme catalyses 2-(9Z-octadecenoyl)-glycerol + H2O = glycerol + (9Z)-octadecenoate + H(+). Functionally, calcium-independent membrane-associated phospholipase that catalyzes complete diacylation of phospholipids by hydrolyzing both sn-1 and sn-2 fatty acyl chains attached to the glycerol backbone (phospholipase B activity). Has dual phospholipase and lysophospholipase activities toward diacylphospholipids. Preferentially cleaves sn-2 ester bonds over sn-1 bonds. Acts as a lipase toward glycerolipid substrates. Hydrolyzes fatty acyl chains of diacylglycerols with preference for the sn-2 position and of triacylglycerols with not positional selectivity. May also hydrolyze long chain retinyl esters such as retinyl palmitate. May contribute to digestion of dietary phospholipids, glycerolipids and retinoids, facilitating lipid absorption at the brush border. The chain is Phospholipase B1, membrane-associated (PLB1) from Homo sapiens (Human).